Reading from the N-terminus, the 368-residue chain is Molybdenum import ATP-binding protein ModC (368 aa).

In terms of domain architecture, ABC transporter spans 1-230 (MTIKIQFKQT…HAMRPWQSFS (230 aa)). 32–39 (GRSGAGKT) is an ATP binding site. The region spanning 291-362 (ATSIRNVLPA…VKGVSVTQRD (72 aa)) is the Mop domain.

This sequence belongs to the ABC transporter superfamily. Molybdate importer (TC 3.A.1.8) family. As to quaternary structure, the complex is composed of two ATP-binding proteins (ModC), two transmembrane proteins (ModB) and a solute-binding protein (ModA).

The protein resides in the cell inner membrane. The enzyme catalyses molybdate(out) + ATP + H2O = molybdate(in) + ADP + phosphate + H(+). Its function is as follows. Part of the ABC transporter complex ModABC involved in molybdenum import. Responsible for energy coupling to the transport system. The polypeptide is Molybdenum import ATP-binding protein ModC (Vibrio parahaemolyticus serotype O3:K6 (strain RIMD 2210633)).